Consider the following 86-residue polypeptide: Defensin-like protein 97 (86 aa).

The first 27 residues, 1-27, serve as a signal peptide directing secretion; it reads MGSLRVSTFAVAVVVCLSILLMSPTDG. 4 cysteine pairs are disulfide-bonded: Cys-31–Cys-74, Cys-38–Cys-60, Cys-44–Cys-71, and Cys-48–Cys-73.

This sequence belongs to the DEFL family.

Its subcellular location is the secreted. The polypeptide is Defensin-like protein 97 (LCR85) (Arabidopsis thaliana (Mouse-ear cress)).